We begin with the raw amino-acid sequence, 204 residues long: MDSDSGEQSEGEPGTAAGPHVFSSKNLALQAQKKILSKIASKTVANMLIDDTSSEIFDELYKVTEIHTHNKKEAHKIMKDAIKVAIKIGILYRNKQFSQEEVIIVEKLRKKLNQTAMTMVSFYEVEYTFDTNVLSKLLHECKDLVHELVQRHLTPRTHGRINHVFNHFADVEFLSTLYGPHGNCRPNLKRICEGINKLLDDKIL.

Positions 1-10 (MDSDSGEQSE) are enriched in acidic residues. Positions 1–20 (MDSDSGEQSEGEPGTAAGPH) are disordered. A binding to phosphoinositides region spans residues 21-204 (VFSSKNLALQ…INKLLDDKIL (184 aa)).

This sequence belongs to the TNFAIP8 family. Widely expressed (at protein level).

It localises to the cytoplasm. The protein localises to the cell membrane. Acts as a lipid transfer protein. Preferentially captures and shuttles two lipid second messengers, i.e., phosphatidylinositol 4,5- bisphosphate and phosphatidylinositol 3,4,5-trisphosphate and increases their levels in the plasma membrane. Additionally, may also function as a lipid-presenting protein to enhance the activity of the PI3K-AKT and MEK-ERK pathways. May act as a regulator of tumorigenesis through its activation of phospholipid signaling. The chain is Tumor necrosis factor alpha-induced protein 8-like protein 3 (Tnfaip8l3) from Mus musculus (Mouse).